The following is a 5875-amino-acid chain: Probable E3 ubiquitin-protein ligase DDB_G0283893 (5875 aa).

Disordered regions lie at residues 17–64 (DNNN…QPPE), 164–185 (NNNN…QSNN), 232–276 (DSNN…TTTS), 302–342 (PSFK…CGNG), 642–693 (TTTT…SPPI), 716–740 (SIRS…TTNA), 1081–1101 (ITPT…TSIP), 1291–1367 (DGWE…KEST), 1806–1851 (QESE…SSPP), 1952–1982 (KKPS…KDEV), 2008–2036 (EDED…DDEE), 2109–2203 (KALK…TGSG), 2893–2930 (DSDD…TNDS), 3083–3119 (TSPS…SGSN), and 3195–3214 (LLPP…DNTN). Residues 18-52 (NNNNNNNNNNNNNNNNNNNNNNNNNNNSNNNNNKN) show a composition bias toward low complexity. The span at 237–249 (DNKENKKEDKESS) shows a compositional bias: basic and acidic residues. 3 stretches are compositionally biased toward low complexity: residues 250 to 276 (KPIA…TTTS), 317 to 333 (TSTI…ITQP), and 642 to 656 (TTTT…TTTT). Positions 657–669 (NESIPMETTRSST) are enriched in polar residues. Residues 670 to 693 (PIPIVNNNNNNNDSKSNSKKSPPI) are compositionally biased toward low complexity. The span at 716–725 (SIRSSSNKVN) shows a compositional bias: polar residues. The segment covering 728–740 (TPKSSTTTTTTNA) has biased composition (low complexity). The segment covering 1297–1330 (FNDDDDEEEDEEEEEEMDEDDSENDEDEDSEESE) has biased composition (acidic residues). The stretch at 1300-1328 (DDDEEEDEEEEEEMDEDDSENDEDEDSEE) forms a coiled coil. 2 stretches are compositionally biased toward low complexity: residues 1347–1363 (TTTT…TATT) and 1838–1851 (SNSS…SSPP). The segment covering 1963 to 1977 (GGCHHSNHHHHHHHS) has biased composition (basic residues). The UBR-type zinc-finger motif lies at 2042–2113 (KVCTYTFTKN…KGNPCKALKP (72 aa)). Low complexity-rich tracts occupy residues 2118 to 2168 (PPKQ…TNTN) and 2178 to 2203 (SSSS…TGSG). The span at 2893 to 2903 (DSDDSDDEFPT) shows a compositional bias: acidic residues. The segment covering 2908 to 2917 (VTSSGLSTSA) has biased composition (low complexity). Positions 3201 to 3211 (SSSNENVVDND) are enriched in low complexity. Residues 3226-3280 (EVLFSCDLCNINPITGKRWNCSNCGDFDLCNQCYQNPEKDHPKDHIFKEFIIDEP) form a ZZ-type zinc finger. The Zn(2+) site is built by Cys-3231, Cys-3234, Cys-3246, Cys-3249, Cys-3255, Cys-3258, His-3266, and His-3270. Disordered stretches follow at residues 3282 to 3312 (KDGD…QDDS), 3326 to 3359 (LNNN…PTTN), and 3754 to 3776 (SSTS…SNDI). Composition is skewed to low complexity over residues 3295 to 3307 (QQQK…LQQD) and 3327 to 3358 (NNNN…TPTT). Positions 3313–3332 (EYDEELKIAISMSLNNNNNN) constitute a UIM domain. Over residues 3754-3763 (SSTSQDTQQE) the composition is skewed to polar residues. Over residues 3764 to 3774 (SSNNNNNNNSN) the composition is skewed to low complexity. The stretch at 4118–4146 (IENQEDHKRAIQTIEKESENAHKKYQRLI) forms a coiled coil. The span at 4182-4222 (NTSTNSTGSNNQSINSSSGNISTNSSSSSSSSFGISNQSSS) shows a compositional bias: low complexity. 3 disordered regions span residues 4182 to 4237 (NTST…GGVI), 4295 to 4323 (FISG…RQCP), and 4616 to 4671 (KILS…FDND). A compositionally biased stretch (gly residues) spans 4223-4236 (GNGGGGVGSGGGGV). Residues 4308-4317 (QQQQQQQQQQ) show a composition bias toward low complexity. Residues 4585-4618 (QIQQQIALQQQQIQQQIQQQQQQLNESVSGLKIL) adopt a coiled-coil conformation. Composition is skewed to low complexity over residues 4619–4635 (SPSS…ATGS) and 4645–4659 (SSGS…ISSS). A UBR4 E3 catalytic module region spans residues 5357–5870 (PALPFVLVLL…EYLLKLYKSV (514 aa)). A HemiRING-type zinc finger spans residues 5476 to 5620 (GFTCMVCREG…WVNLNNISRV (145 aa)). Zn(2+) contacts are provided by Cys-5479, Cys-5482, His-5554, and Cys-5557. In terms of domain architecture, UZI spans 5623–5870 (PKFRILSHDL…EYLLKLYKSV (248 aa)). Positions 5819–5846 (QVDVKELLNCFENELKEFQDEMEFFDDE) form a coiled coil.

This sequence belongs to the UBR4 family.

It participates in protein modification; protein ubiquitination. Its function is as follows. Probable E3 ubiquitin-protein ligase. This Dictyostelium discoideum (Social amoeba) protein is Probable E3 ubiquitin-protein ligase DDB_G0283893.